The primary structure comprises 176 residues: Ribosome maturation factor RimM (176 aa).

The 74-residue stretch at Q103–I176 folds into the PRC barrel domain.

The protein belongs to the RimM family. Binds ribosomal protein uS19.

It localises to the cytoplasm. An accessory protein needed during the final step in the assembly of 30S ribosomal subunit, possibly for assembly of the head region. Essential for efficient processing of 16S rRNA. May be needed both before and after RbfA during the maturation of 16S rRNA. It has affinity for free ribosomal 30S subunits but not for 70S ribosomes. In Thermotoga neapolitana (strain ATCC 49049 / DSM 4359 / NBRC 107923 / NS-E), this protein is Ribosome maturation factor RimM.